The sequence spans 139 residues: CLAVATA3/ESR (CLE)-related protein 1 (139 aa).

The signal sequence occupies residues 1-22; that stretch reads MPNIFKILLIVLLAVVSFRLSA. Positions 23 to 90 are required for secretion from the host cytoplasm to the host apoplasm; the sequence is STGDKKTAND…VPSHLTNRSM (68 aa). Asn37 and Asn87 each carry an N-linked (GlcNAc...) asparagine glycan. Residues 66 to 139 are disordered; it reads AIGRSNAQGG…SPSGPDPHHH (74 aa). A coiled-coil region spans residues 100 to 125; the sequence is EKGAATRVEKMRAQLRELAEKMTDKD. Residues 106–128 are compositionally biased toward basic and acidic residues; sequence RVEKMRAQLRELAEKMTDKDPKR. The short motif at 128-139 is the CLE element; sequence RLSPSGPDPHHH.

It belongs to the CLV3/ESR signal peptide family. In terms of tissue distribution, highly expressed exclusively within the dorsal esophageal gland cell during syncytium formation in host plants (at protein level).

It localises to the secreted. The protein resides in the host cytoplasm. Its subcellular location is the host extracellular space. It is found in the extracellular space. The protein localises to the apoplast. Functionally, mimics host plant CLE extracellular signal peptides that regulate cell fate. May play a role in the differentiation or division of feeding cells (syncytia) induced in plant roots during infection. The polypeptide is CLAVATA3/ESR (CLE)-related protein 1 (CLE1) (Heterodera glycines (Soybean cyst nematode worm)).